We begin with the raw amino-acid sequence, 466 residues long: Glutamate--tRNA ligase (466 aa).

The 'HIGH' region motif lies at P9 to S19. Residues K237–R241 carry the 'KMSKS' region motif. Residue K240 participates in ATP binding.

Belongs to the class-I aminoacyl-tRNA synthetase family. Glutamate--tRNA ligase type 1 subfamily. In terms of assembly, monomer.

It is found in the cytoplasm. It carries out the reaction tRNA(Glu) + L-glutamate + ATP = L-glutamyl-tRNA(Glu) + AMP + diphosphate. Functionally, catalyzes the attachment of glutamate to tRNA(Glu) in a two-step reaction: glutamate is first activated by ATP to form Glu-AMP and then transferred to the acceptor end of tRNA(Glu). The sequence is that of Glutamate--tRNA ligase from Baumannia cicadellinicola subsp. Homalodisca coagulata.